The chain runs to 46 residues: GPSFCKADEKPCEYHADCCNCCLSGICAPSTNWILPGCSTSSFFKI.

4-hydroxyproline; partial occurs at positions 2 and 11. 4 disulfide bridges follow: Cys5–Cys19, Cys12–Cys22, Cys18–Cys27, and Cys21–Cys38. A 4-hydroxyproline modification is found at Pro29. Phe44 carries the D-phenylalanine modification.

The protein belongs to the conotoxin I1 superfamily. In terms of processing, the natural D-Phe-44 form of the peptide is more potent than the L-Phe-44 form. Expressed by the venom duct.

Its subcellular location is the secreted. Its function is as follows. Iota-conotoxins bind to voltage-gated sodium channels and act as agonists by shifting the voltage-dependence of activation to more hyperpolarized levels. This toxin acts on Nav1.6/SCN8A &gt; Nav1.2/SCN2A &gt; Nav1.7/SCN9A sodium channels. Produces general excitatory symptoms upon intracorporeal injection and repetitive action potentials in the frog cutaneous pectoris muscle. Natural peptide (with D-Phe) is active on nerve, but not on muscle. Synthetic peptide (with L-Phe) is not active on both nerve and muscle. This Conus radiatus (Rayed cone) protein is Iota-conotoxin RXIA.